Here is a 110-residue protein sequence, read N- to C-terminus: Large ribosomal subunit protein uL22 (110 aa).

The protein belongs to the universal ribosomal protein uL22 family. As to quaternary structure, part of the 50S ribosomal subunit.

Its function is as follows. This protein binds specifically to 23S rRNA; its binding is stimulated by other ribosomal proteins, e.g. L4, L17, and L20. It is important during the early stages of 50S assembly. It makes multiple contacts with different domains of the 23S rRNA in the assembled 50S subunit and ribosome. In terms of biological role, the globular domain of the protein is located near the polypeptide exit tunnel on the outside of the subunit, while an extended beta-hairpin is found that lines the wall of the exit tunnel in the center of the 70S ribosome. In Pseudomonas aeruginosa (strain LESB58), this protein is Large ribosomal subunit protein uL22.